A 400-amino-acid polypeptide reads, in one-letter code: MSSLHKSRIADFQDVLKEPSIVLEKLRELSFSGIPCEGGLRCLCWKILLNYLPLERASWTSILAKQRGLYSQFLREMIIQPGIAKANMGVFREDVTFEDHPLNPNPDSRWNTYFKDNEVLLQIDKDVRRLCPDISFFQRATEYPCLLILDPQNEFETLRKRVEQTTLKSQTVARNRSGVTNMSSPHKNSAPSALNEYEVLPNGCEAHWEVVERILFIYAKLNPGIAYVQGMNEIVGPLYYTFATDPNSEWKEHAEADTFFCFTNLMAEIRDNFIKSLDDSQCGITYKMEKVYSTLKDKDVELYLKLQEQSIKPQFFAFRWLTLLLSQEFLLPDVIRIWDSLFADGNRFDFLLLVCCAMLILIREQLLEGDFTVNMRLLQDYPITDVCQILQKAKELQDSK.

Residues 35–345 enclose the Rab-GAP TBC domain; sequence PCEGGLRCLC…RIWDSLFADG (311 aa).

As to quaternary structure, interacts with RAB1A and RAB10; in a GTP-dependent manner. In terms of tissue distribution, expressed in adipocytes.

Its subcellular location is the membrane. It localises to the cytoplasm. Functionally, acts as a GTPase-activating protein for RAB35. Together with RAB35 may be involved in regulation of insulin-induced glucose transporter SLC2A4/GLUT4 translocation to the plasma membrane in adipocytes. This Mus musculus (Mouse) protein is TBC1 domain family member 13 (Tbc1d13).